The sequence spans 243 residues: UPF0173 metal-dependent hydrolase Xaut_3786 (243 aa).

This sequence belongs to the UPF0173 family.

The sequence is that of UPF0173 metal-dependent hydrolase Xaut_3786 from Xanthobacter autotrophicus (strain ATCC BAA-1158 / Py2).